Here is a 102-residue protein sequence, read N- to C-terminus: UPF0235 protein msl4154 (102 aa).

The protein belongs to the UPF0235 family.

In Mesorhizobium japonicum (strain LMG 29417 / CECT 9101 / MAFF 303099) (Mesorhizobium loti (strain MAFF 303099)), this protein is UPF0235 protein msl4154.